A 404-amino-acid polypeptide reads, in one-letter code: Tryptophan synthase beta chain (404 aa).

N6-(pyridoxal phosphate)lysine is present on lysine 98.

The protein belongs to the TrpB family. Tetramer of two alpha and two beta chains. Requires pyridoxal 5'-phosphate as cofactor.

It catalyses the reaction (1S,2R)-1-C-(indol-3-yl)glycerol 3-phosphate + L-serine = D-glyceraldehyde 3-phosphate + L-tryptophan + H2O. It functions in the pathway amino-acid biosynthesis; L-tryptophan biosynthesis; L-tryptophan from chorismate: step 5/5. Functionally, the beta subunit is responsible for the synthesis of L-tryptophan from indole and L-serine. The chain is Tryptophan synthase beta chain from Rhodopseudomonas palustris (strain BisB18).